The sequence spans 1258 residues: Cohesin subunit SA-1 (1258 aa).

A disordered region spans residues 1–59 (MITSELPVLQDSTNETTAHSDAGSELEETEVKGKRKRGRPGRPPSTNKKPRKSPGEKSR). Over residues 10–19 (QDSTNETTAH) the composition is skewed to polar residues. Serine 24 is subject to Phosphoserine. One can recognise an SCD domain in the interval 296–381 (FVHRYRDAIA…NRFKDRIVSM (86 aa)). Serine 756, serine 1062, and serine 1065 each carry phosphoserine. A disordered region spans residues 1055–1148 (GGEDDRMSVN…EHGSEPDFLH (94 aa)). The segment covering 1062–1075 (SVNSGSSSSKTSSV) has biased composition (low complexity). Residues 1076-1087 (RSKKGRPPLHRK) are compositionally biased toward basic residues. Serine 1093 is subject to Phosphoserine. Polar residues predominate over residues 1095–1106 (DNTWLNRTDTMI). The span at 1137-1146 (ESEHGSEPDF) shows a compositional bias: basic and acidic residues. Residue lysine 1161 forms a Glycyl lysine isopeptide (Lys-Gly) (interchain with G-Cter in SUMO2) linkage.

It belongs to the SCC3 family. In terms of assembly, cohesin complexes are composed of a heterodimer between a SMC1 protein (SMC1A or SMC1B) and SMC3, which are attached via their hinge domain, and RAD21 which link them at their heads, and one STAG protein (STAG1, STAG2 or STAG3). In cohesin complexes, STAG1 is mutually exclusive with STAG2 and STAG3. Interacts directly with RAD21 in cohesin complex. The cohesin complex interacts with the cohesin loading complex subunits NIPBL/Scc2 (via HEAT repeats) and MAU2/Scc4. NIPBL directly contacts all members of the complex, RAD21, SMC1A/B, SMC3 and STAG1. Post-translationally, phosphorylated by PLK1. The large dissociation of cohesin from chromosome arms during prophase is partly due to its phosphorylation.

It localises to the nucleus. The protein resides in the chromosome. Its function is as follows. Component of cohesin complex, a complex required for the cohesion of sister chromatids after DNA replication. The cohesin complex apparently forms a large proteinaceous ring within which sister chromatids can be trapped. At anaphase, the complex is cleaved and dissociates from chromatin, allowing sister chromatids to segregate. The cohesin complex may also play a role in spindle pole assembly during mitosis. This is Cohesin subunit SA-1 (Stag1) from Mus musculus (Mouse).